We begin with the raw amino-acid sequence, 343 residues long: Methionine import ATP-binding protein MetN 3 (343 aa).

The ABC transporter domain maps to 2-241 (IELSNITKVF…PKTPLAQKFI (240 aa)). Residue 38 to 45 (GASGAGKS) participates in ATP binding.

It belongs to the ABC transporter superfamily. Methionine importer (TC 3.A.1.24) family. In terms of assembly, the complex is composed of two ATP-binding proteins (MetN), two transmembrane proteins (MetI) and a solute-binding protein (MetQ).

Its subcellular location is the cell inner membrane. It catalyses the reaction L-methionine(out) + ATP + H2O = L-methionine(in) + ADP + phosphate + H(+). It carries out the reaction D-methionine(out) + ATP + H2O = D-methionine(in) + ADP + phosphate + H(+). Its function is as follows. Part of the ABC transporter complex MetNIQ involved in methionine import. Responsible for energy coupling to the transport system. This chain is Methionine import ATP-binding protein MetN 3, found in Pectobacterium atrosepticum (strain SCRI 1043 / ATCC BAA-672) (Erwinia carotovora subsp. atroseptica).